Reading from the N-terminus, the 767-residue chain is Start control protein cdc10 (767 aa).

The segment at 17-44 (FSYQKRPEDEPSQPLSNRNINKLNDSST) is disordered. Over residues 29–44 (QPLSNRNINKLNDSST) the composition is skewed to polar residues. One can recognise an HTH APSES-type domain in the interval 66–173 (ELYAVECSGM…FNLDLFPKFS (108 aa)). Positions 98-119 (ISQILRLAGTSSSENAKELDDI) form a DNA-binding region, H-T-H motif. Positions 189 to 230 (TSSFNTRSPLRNHNFSNPSKSSKNGVHTINNMQSSPSPSSSF) are disordered. Residues 192–221 (FNTRSPLRNHNFSNPSKSSKNGVHTINNMQ) are compositionally biased toward polar residues. Residue Ser252 is modified to Phosphoserine. A Nuclear localization signal motif is present at residues 261–264 (KRHR). ANK repeat units lie at residues 356-385 (LGHA…NPLR) and 483-512 (NGDT…SAYI). Residues 542 to 562 (VSLMSENLSSKEKTAVPPRQK) are disordered.

In terms of assembly, DSC1 contains cdc10 and sct1/res1. Interacts with pol5.

The protein localises to the nucleus. Its function is as follows. Major component of the cell cycle transcription factor complex MBF (MCB binding factor, also known as DSC1), that controls G1-S phase specific gene expression. Involved in the control of rRNA production, via interaction with pol5. May be involved in the transcriptional regulation of the cdc22 and cdt1 genes. In fission yeast, two genes, cdc10 and cdc2, are required for the cell cycle control called start, the point early in the G1 phase at which cells become committed to the mitotic cycle. This Schizosaccharomyces pombe (strain 972 / ATCC 24843) (Fission yeast) protein is Start control protein cdc10 (cdc10).